The chain runs to 829 residues: Dipeptidyl peptidase family member 2 (829 aa).

Over 1 to 27 the chain is Cytoplasmic; sequence MENDNYDVEEQGCSVFNGKHGYFARSC. A helical; Signal-anchor for type II membrane protein transmembrane segment spans residues 28-48; it reads CVVFILIICVIFVFSVIFTFM. At 49–829 the chain is on the extracellular side; that stretch reads QNPINLNSDN…DCFKSNLDLL (781 aa). Residues N61, N66, N183, N209, N314, and N359 are each glycosylated (N-linked (GlcNAc...) asparagine). C514 and C533 form a disulfide bridge. Catalysis depends on S691, which acts as the Charge relay system. Residues C711 and C821 are joined by a disulfide bond. The N-linked (GlcNAc...) asparagine glycan is linked to N754. Active-site charge relay system residues include D768 and H800.

It belongs to the peptidase S9B family. DPPIV subfamily.

The protein resides in the cell membrane. In terms of biological role, removes N-terminal dipeptides sequentially from polypeptides. Essential for control of distal tip cell migration. The chain is Dipeptidyl peptidase family member 2 (dpf-2) from Caenorhabditis elegans.